We begin with the raw amino-acid sequence, 431 residues long: Gamma-glutamyl phosphate reductase (431 aa).

This sequence belongs to the gamma-glutamyl phosphate reductase family.

The protein resides in the cytoplasm. The enzyme catalyses L-glutamate 5-semialdehyde + phosphate + NADP(+) = L-glutamyl 5-phosphate + NADPH + H(+). It functions in the pathway amino-acid biosynthesis; L-proline biosynthesis; L-glutamate 5-semialdehyde from L-glutamate: step 2/2. Functionally, catalyzes the NADPH-dependent reduction of L-glutamate 5-phosphate into L-glutamate 5-semialdehyde and phosphate. The product spontaneously undergoes cyclization to form 1-pyrroline-5-carboxylate. In Synechococcus elongatus (strain ATCC 33912 / PCC 7942 / FACHB-805) (Anacystis nidulans R2), this protein is Gamma-glutamyl phosphate reductase.